We begin with the raw amino-acid sequence, 72 residues long: Disintegrin batroxostatin (72 aa).

One can recognise a Disintegrin domain in the interval 1–72; that stretch reads EAGEECDCGA…SADCPRNRFY (72 aa). 6 disulfide bridges follow: Cys-6–Cys-21, Cys-8–Cys-16, Cys-15–Cys-38, Cys-29–Cys-35, Cys-34–Cys-59, and Cys-47–Cys-66. A Cell attachment site motif is present at residues 51 to 53; that stretch reads RGD. The disordered stretch occupies residues 52–72; it reads GDNPDDRCTGQSADCPRNRFY.

This sequence belongs to the venom metalloproteinase (M12B) family. P-II subfamily. P-IIa sub-subfamily. In terms of assembly, monomer. In terms of tissue distribution, expressed by the venom gland.

Its subcellular location is the secreted. In terms of biological role, inhibits fibrinogen interaction with platelets. Acts by binding to the glycoprotein IIb-IIIa receptor (ITGA2B/ITGB3) on the platelet surface and inhibits aggregation induced by ADP, thrombin, platelet-activating factor and collagen. Also inhibits T24 and SK-Mel-28 cell adhesion to fibronectin with IC(50) of 4.4 uM and 33 nM, respectively. In Bothrops atrox (Barba amarilla), this protein is Disintegrin batroxostatin.